The sequence spans 199 residues: Prostatic spermine-binding protein (199 aa).

Positions 1–18 (MLLLLTLAFLASPTCRAQ) are cleaved as a signal peptide. The 133-residue stretch at 19–151 (NVLGNAAGKY…VRGIGFKWGN (133 aa)) folds into the Jacalin-type lectin domain. N-linked (GlcNAc...) asparagine glycosylation is present at Asn62. The tract at residues 159–199 (HYNNKEDKADNKDADNKDADNKDDGDEDDDGNDDDDQKDES) is disordered. Residues 160 to 180 (YNNKEDKADNKDADNKDADNK) are compositionally biased toward basic and acidic residues. Residues 181-199 (DDGDEDDDGNDDDDQKDES) show a composition bias toward acidic residues.

The protein to rat SBP. As to expression, prostate.

Functionally, this protein seems to be functional equivalent to rat prostatic spermine-binding protein, which is involved in polyamine binding. This chain is Prostatic spermine-binding protein (Sbp), found in Mus musculus (Mouse).